The following is a 635-amino-acid chain: Biosynthetic arginine decarboxylase (635 aa).

Position 100 is an N6-(pyridoxal phosphate)lysine (Lys-100). A substrate-binding site is contributed by 282 to 292 (VDIGGGLGVDY).

Belongs to the Orn/Lys/Arg decarboxylase class-II family. SpeA subfamily. Mg(2+) is required as a cofactor. It depends on pyridoxal 5'-phosphate as a cofactor.

The enzyme catalyses L-arginine + H(+) = agmatine + CO2. The protein operates within amine and polyamine biosynthesis; agmatine biosynthesis; agmatine from L-arginine: step 1/1. Catalyzes the biosynthesis of agmatine from arginine. In Geotalea daltonii (strain DSM 22248 / JCM 15807 / FRC-32) (Geobacter daltonii), this protein is Biosynthetic arginine decarboxylase.